A 223-amino-acid chain; its full sequence is Neurotrophic factor BDNF precursor form (223 aa).

The N-terminal stretch at 1–5 (SCMKA) is a signal peptide. The propeptide occupies 6–114 (APMKEVSIRG…AANMSMRVRR (109 aa)). N-linked (GlcNAc...) asparagine glycosylation is present at Asn-107. Intrachain disulfides connect Cys-127–Cys-194 and Cys-172–Cys-223.

Belongs to the NGF-beta family.

The protein resides in the secreted. Functionally, promotes the survival of neuronal populations that are all located either in the central nervous system or directly connected to it. This is Neurotrophic factor BDNF precursor form (BDNF) from Exiliboa placata (Oaxacan dwarf boa).